Here is a 338-residue protein sequence, read N- to C-terminus: Transcription factor MYB76 (338 aa).

HTH myb-type domains lie at 9–65 and 66–116; these read GEGL…KPDI and KRGE…KKRL. DNA-binding regions (H-T-H motif) lie at residues 37–61 and 89–112; these read WRDI…TNYL and WSVI…NTHL. Disordered regions lie at residues 123-171 and 176-195; these read PVTH…SSNL and SKIS…CKKR. Residues 140–154 show a composition bias toward basic and acidic residues; sequence MKFDFQKKSNQDEHS. A compositionally biased stretch (low complexity) spans 155 to 171; sequence SQSSSTTPASLPLSSNL.

In terms of assembly, can form complexes with MYC2, MYC3 or MYC4. As to expression, expressed in both vegetative and generative organs. Mostly present in inflorescences, flowers and seedlings, in the transition zone between roots and the foliar part, and stems, and, to a lower extent, in leaves (in midvein and trichomes).

The protein localises to the nucleus. In terms of biological role, plays a role in determining the spatial distribution of aliphatic glucosinolates (AGLSs) within the leaf, mostly short chained. Together with MYB28/HAG1 and MYB29/HAG3, promotes aliphatic glucosinolate biosynthesis and represses indolic glucosinolate biosynthesis, but could not activate AGSL biosynthesis on its own. The polypeptide is Transcription factor MYB76 (MYB76) (Arabidopsis thaliana (Mouse-ear cress)).